Consider the following 173-residue polypeptide: MAARGRRAEPPGREAPGPAGSGRSRWAESGPGTSPESGDDEVSGSSPVSSGVNLFANDGSFLELFKRKMEEEQRQRQEEPPPGPQRPDPPASAAAGPGNPKRKGGPGPTLSFVGKRRGGNKLALKTGIVAKKQKTEDEVLTSKGDAWAKYMAEVKKYKAHQCGDDDKTRPLVK.

Residues 1–12 (MAARGRRAEPPG) show a composition bias toward basic and acidic residues. Residues 1 to 119 (MAARGRRAEP…LSFVGKRRGG (119 aa)) form a disordered region. Low complexity-rich tracts occupy residues 14-23 (EAPGPAGSGR) and 43-52 (SGSSPVSSGV). Over residues 64 to 79 (LFKRKMEEEQRQRQEE) the composition is skewed to basic and acidic residues. Residues 80 to 90 (PPPGPQRPDPP) show a composition bias toward pro residues. Lys-143 bears the N6-acetyllysine mark.

As to quaternary structure, part of the telomerase RNA 3' end complex which contains about 488 proteins.

Functionally, exoribonuclease that is part of the telomerase RNA 3' end processing complex and which has the ability to cleave all four unpaired RNA nucleotides from the 5' end or 3' end with higher efficiency for purine bases. This chain is Telomerase RNA component interacting RNase, found in Mus musculus (Mouse).